The primary structure comprises 156 residues: Rhombotin-1 (156 aa).

2 consecutive LIM zinc-binding domains span residues 22-84 and 86-148; these read KGCA…LFGT and GNCA…GQLN.

As to expression, expressed in the brain and not in the thymus.

The protein resides in the nucleus. Functionally, may be involved in gene regulation within neural lineage cells potentially by direct DNA binding or by binding to other transcription factors. This Bos taurus (Bovine) protein is Rhombotin-1 (LMO1).